A 125-amino-acid polypeptide reads, in one-letter code: uncharacterized protein (125 aa).

This is an uncharacterized protein from Mycobacterium bovis (strain ATCC BAA-935 / AF2122/97).